The following is a 257-amino-acid chain: Hydroxyacylglutathione hydrolase (257 aa).

Zn(2+)-binding residues include histidine 54, histidine 56, aspartate 58, histidine 59, histidine 113, aspartate 137, and histidine 175.

This sequence belongs to the metallo-beta-lactamase superfamily. Glyoxalase II family. Monomer. Zn(2+) is required as a cofactor.

The catalysed reaction is an S-(2-hydroxyacyl)glutathione + H2O = a 2-hydroxy carboxylate + glutathione + H(+). Its pathway is secondary metabolite metabolism; methylglyoxal degradation; (R)-lactate from methylglyoxal: step 2/2. Thiolesterase that catalyzes the hydrolysis of S-D-lactoyl-glutathione to form glutathione and D-lactic acid. The protein is Hydroxyacylglutathione hydrolase of Crocosphaera subtropica (strain ATCC 51142 / BH68) (Cyanothece sp. (strain ATCC 51142)).